Here is a 146-residue protein sequence, read N- to C-terminus: CysO-cysteine peptidase (146 aa).

The 124-residue stretch at 11-134 (LVIRADLVNA…LRSYRIVDGA (124 aa)) folds into the MPN domain. Zn(2+) contacts are provided by His88, His90, and Asp101. The short motif at 88 to 101 (HSHTATEAYPSRTD) is the JAMM motif element.

Belongs to the peptidase M67A family. It depends on Zn(2+) as a cofactor.

It catalyses the reaction [CysO sulfur-carrier protein]-Gly-NH-CH2-C(O)-S-L-Cys + H2O = [CysO sulfur-carrier protein]-C-terminal Gly-Gly + L-cysteine + H(+). It participates in amino-acid biosynthesis; L-cysteine biosynthesis. In terms of biological role, protease that hydrolyzes the covalent CysO-cysteine adduct synthesized by CysM to release L-cysteine and regenerate CysO. The sequence is that of CysO-cysteine peptidase (mec) from Mycobacterium bovis (strain ATCC BAA-935 / AF2122/97).